The sequence spans 123 residues: Small ribosomal subunit protein uS12 (123 aa).

Residues 1–29 form a disordered region; that stretch reads MPTINQLVRKGREPQKAKSKVPAMEQNPQ. D89 carries the 3-methylthioaspartic acid modification.

The protein belongs to the universal ribosomal protein uS12 family. In terms of assembly, part of the 30S ribosomal subunit. Contacts proteins S8 and S17. May interact with IF1 in the 30S initiation complex.

Functionally, with S4 and S5 plays an important role in translational accuracy. Its function is as follows. Interacts with and stabilizes bases of the 16S rRNA that are involved in tRNA selection in the A site and with the mRNA backbone. Located at the interface of the 30S and 50S subunits, it traverses the body of the 30S subunit contacting proteins on the other side and probably holding the rRNA structure together. The combined cluster of proteins S8, S12 and S17 appears to hold together the shoulder and platform of the 30S subunit. The sequence is that of Small ribosomal subunit protein uS12 from Novosphingobium aromaticivorans (strain ATCC 700278 / DSM 12444 / CCUG 56034 / CIP 105152 / NBRC 16084 / F199).